Consider the following 167-residue polypeptide: MRTLMIEPLTKEAFAPFGDVIETDGSDHFMINNGSTMRFHKLATVETAKPEDNAIISIFRADALDMPLTVCMLERHPLGSQAFIPLLGNPFLIVVAPLGDAPVSGLVRAFVTNGRQGINYHRGVWHHPVLTIEKRDDFLVVDRSGTGNNCDEHFFEEDERLILAPHQ.

This sequence belongs to the ureidoglycolate lyase family. Homodimer. The cofactor is Ni(2+).

The enzyme catalyses (S)-ureidoglycolate = urea + glyoxylate. Its pathway is nitrogen metabolism; (S)-allantoin degradation. Functionally, catalyzes the catabolism of the allantoin degradation intermediate (S)-ureidoglycolate, generating urea and glyoxylate. Involved in the utilization of allantoin as nitrogen source. The protein is Ureidoglycolate lyase of Pseudomonas fluorescens (strain SBW25).